The chain runs to 132 residues: Putative holo-[acyl-carrier-protein] synthase (132 aa).

Residues Asp6 and Glu67 each coordinate Mg(2+).

It belongs to the P-Pant transferase superfamily. AcpS family.

It catalyses the reaction apo-[ACP] + CoA = holo-[ACP] + adenosine 3',5'-bisphosphate + H(+). In terms of biological role, transfers the 4'-phosphopantetheine moiety from coenzyme A to a Ser of acyl-carrier-protein. The protein is Putative holo-[acyl-carrier-protein] synthase (new8) of Schizosaccharomyces pombe (strain 972 / ATCC 24843) (Fission yeast).